A 65-amino-acid polypeptide reads, in one-letter code: Photosystem II reaction center protein H (65 aa).

Residues 27–47 (GAVPVMAFIGVLLLVFLVIML) form a helical membrane-spanning segment.

The protein belongs to the PsbH family. In terms of assembly, PSII is composed of 1 copy each of membrane proteins PsbA, PsbB, PsbC, PsbD, PsbE, PsbF, PsbH, PsbI, PsbJ, PsbK, PsbL, PsbM, PsbT, PsbX, PsbY, Psb30/Ycf12, peripheral proteins PsbO, CyanoQ (PsbQ), PsbU, PsbV and a large number of cofactors. It forms dimeric complexes.

It is found in the cellular thylakoid membrane. Its function is as follows. One of the components of the core complex of photosystem II (PSII), required for its stability and/or assembly. PSII is a light-driven water:plastoquinone oxidoreductase that uses light energy to abstract electrons from H(2)O, generating O(2) and a proton gradient subsequently used for ATP formation. It consists of a core antenna complex that captures photons, and an electron transfer chain that converts photonic excitation into a charge separation. This Prochlorococcus marinus (strain NATL1A) protein is Photosystem II reaction center protein H.